Reading from the N-terminus, the 379-residue chain is Chaperone protein DnaJ (379 aa).

Residues 5-70 enclose the J domain; that stretch reads DYYELLEVSR…QKRAAYDQFG (66 aa). The segment at 135–213 adopts a CR-type zinc-finger fold; the sequence is GKEVEITVPR…CHGQGRVRES (79 aa). Residues Cys148, Cys151, Cys165, Cys168, Cys187, Cys190, Cys201, and Cys204 each coordinate Zn(2+). CXXCXGXG motif repeat units lie at residues 148–155, 165–172, 187–194, and 201–208; these read CTVCEGSG, CETCQGMG, CPTCHGEG, and CASCHGQG.

Belongs to the DnaJ family. In terms of assembly, homodimer. Zn(2+) serves as cofactor.

It localises to the cytoplasm. Participates actively in the response to hyperosmotic and heat shock by preventing the aggregation of stress-denatured proteins and by disaggregating proteins, also in an autonomous, DnaK-independent fashion. Unfolded proteins bind initially to DnaJ; upon interaction with the DnaJ-bound protein, DnaK hydrolyzes its bound ATP, resulting in the formation of a stable complex. GrpE releases ADP from DnaK; ATP binding to DnaK triggers the release of the substrate protein, thus completing the reaction cycle. Several rounds of ATP-dependent interactions between DnaJ, DnaK and GrpE are required for fully efficient folding. Also involved, together with DnaK and GrpE, in the DNA replication of plasmids through activation of initiation proteins. This chain is Chaperone protein DnaJ, found in Legionella pneumophila (strain Corby).